The following is a 267-amino-acid chain: Alpha-tubulin N-acetyltransferase (267 aa).

The 197-residue stretch at 1–197 (MDFRAGLENV…NNFVVYSEFF (197 aa)) folds into the N-acetyltransferase domain. Residues 131–144 (FYIH…GYGK) and 167–176 (SMKMIQFLHK) each bind acetyl-CoA.

It belongs to the acetyltransferase ATAT1 family.

The catalysed reaction is L-lysyl-[alpha-tubulin] + acetyl-CoA = N(6)-acetyl-L-lysyl-[alpha-tubulin] + CoA + H(+). In terms of biological role, specifically acetylates 'Lys-40' in alpha-tubulin on the lumenal side of microtubules. Promotes microtubule destabilization and accelerates microtubule dynamics; this activity may be independent of acetylation activity. Acetylates alpha-tubulin with a slow enzymatic rate, due to a catalytic site that is not optimized for acetyl transfer. Enters the microtubule through each end and diffuses quickly throughout the lumen of microtubules. Acetylates only long/old microtubules because of its slow acetylation rate since it does not have time to act on dynamically unstable microtubules before the enzyme is released. The polypeptide is Alpha-tubulin N-acetyltransferase (Schistosoma japonicum (Blood fluke)).